A 616-amino-acid chain; its full sequence is Schwannomin-interacting protein 1 homolog (616 aa).

A compositionally biased stretch (acidic residues) spans 38–50 (ESDLTDSDREDDP). Disordered stretches follow at residues 38-71 (ESDL…GQDS), 204-251 (LKQT…PDTF), and 292-320 (SSLE…YSNQ). Polar residues-rich tracts occupy residues 62–71 (SETFKNGQDS) and 204–217 (LKQT…GNST). Residues 550–594 (LQLLVNNLQEYIENLNVTLLESLKERDDLNSDQDDILHDLEKINN) adopt a coiled-coil conformation.

Belongs to the SCHIP1 family. As to quaternary structure, interacts with ex; the interaction results in recruitment of Schip1 to the apical cell membrane. Interacts with Tao; the interaction enhances Tao kinase activity. Interacts with Mer. In eye disks of the third instar larvae, expressed in all cells (at protein level).

The protein localises to the cell junction. The protein resides in the adherens junction. Its subcellular location is the apical cell membrane. Functionally, regulator of the Hippo/SWH (Sav/Wts/Hpo) signaling pathway, a signaling pathway that plays a pivotal role in organ size control and tumor suppression by restricting proliferation and promoting apoptosis. The core of this pathway is composed of a kinase cascade wherein Hippo (hpo), in complex with its regulatory protein Salvador (sav), phosphorylates and activates Warts (wts) in complex with its regulatory protein Mats, which in turn phosphorylates and inactivates the Yorkie (yki) oncoprotein. Schip1 promotes kinase activity of Tao and enhances phosphorylation of hpo by Tao. In Drosophila melanogaster (Fruit fly), this protein is Schwannomin-interacting protein 1 homolog.